A 234-amino-acid polypeptide reads, in one-letter code: Triggering receptor expressed on myeloid cells 1 (234 aa).

The signal sequence occupies residues 1-20 (MRKTRLWGLLWMLFVSELRA). The Extracellular segment spans residues 21–205 (ATKLTEEKYE…TDIIRVPVFN (185 aa)). The 109-residue stretch at 26–134 (EEKYELKEGQ…LFDRIRLVVT (109 aa)) folds into the Ig-like V-type domain. Residues cysteine 41 and cysteine 113 are joined by a disulfide bond. 3 N-linked (GlcNAc...) asparagine glycosylation sites follow: asparagine 146, asparagine 191, and asparagine 194. Residues 206–226 (IVILLAGGFLSKSLVFSVLFA) form a helical membrane-spanning segment. The Cytoplasmic portion of the chain corresponds to 227–234 (VTLRSFVP).

Monomer. Homomultimer; when activated. Interacts with TYROBP/DAP12. Interacts with TLR4. Post-translationally, glycosylated. Mostly expressed by immune cells of the myeloid lineage, such as monocytes, macrophages, neutrophils and dendritic cells. Expression is associated with a mature stage of myeloid development. Highly expressed in adult liver, lung and spleen than in corresponding fetal tissue. Also expressed in the lymph node, placenta, spinal cord and heart tissues. Isoform 2 was detected in the lung, liver and mature monocytes.

Its subcellular location is the cell membrane. The protein resides in the secreted. Cell surface receptor that plays important roles in innate and adaptive immunity by amplifying inflammatory responses. Upon activation by various ligands such as PGLYRP1, HMGB1 or HSP70, multimerizes and forms a complex with transmembrane adapter TYROBP/DAP12. In turn, initiates a SYK-mediated cascade of tyrosine phosphorylation, activating multiple downstream mediators such as BTK, MAPK1, MAPK3 or phospholipase C-gamma. This cascade promotes the neutrophil- and macrophage-mediated release of pro-inflammatory cytokines and/or chemokines, as well as their migration and thereby amplifies inflammatory responses that are triggered by bacterial and fungal infections. By also promoting the amplification of inflammatory signals that are initially triggered by Toll-like receptor (TLR) and NOD-like receptor engagement, plays a major role in the pathophysiology of acute and chronic inflammatory diseases of different etiologies including septic shock and atherosclerosis. In terms of biological role, acts as a decoy receptor, counterbalancing TREM1 pro-inflammatory activity through the neutralization of its ligand. The chain is Triggering receptor expressed on myeloid cells 1 (TREM1) from Homo sapiens (Human).